A 270-amino-acid chain; its full sequence is Putative pyruvate, phosphate dikinase regulatory protein 2 (270 aa).

151-158 (GVSRTSKT) lines the ADP pocket.

The protein belongs to the pyruvate, phosphate/water dikinase regulatory protein family. PDRP subfamily.

The catalysed reaction is N(tele)-phospho-L-histidyl/L-threonyl-[pyruvate, phosphate dikinase] + ADP = N(tele)-phospho-L-histidyl/O-phospho-L-threonyl-[pyruvate, phosphate dikinase] + AMP + H(+). It carries out the reaction N(tele)-phospho-L-histidyl/O-phospho-L-threonyl-[pyruvate, phosphate dikinase] + phosphate + H(+) = N(tele)-phospho-L-histidyl/L-threonyl-[pyruvate, phosphate dikinase] + diphosphate. Bifunctional serine/threonine kinase and phosphorylase involved in the regulation of the pyruvate, phosphate dikinase (PPDK) by catalyzing its phosphorylation/dephosphorylation. The protein is Putative pyruvate, phosphate dikinase regulatory protein 2 of Listeria welshimeri serovar 6b (strain ATCC 35897 / DSM 20650 / CCUG 15529 / CIP 8149 / NCTC 11857 / SLCC 5334 / V8).